Here is a 333-residue protein sequence, read N- to C-terminus: Glycerol-3-phosphate dehydrogenase [NAD(P)+] (333 aa).

NADPH-binding residues include tryptophan 16, arginine 36, and lysine 109. Lysine 109, glycine 137, and serine 139 together coordinate sn-glycerol 3-phosphate. Alanine 141 serves as a coordination point for NADPH. The sn-glycerol 3-phosphate site is built by lysine 192, aspartate 245, serine 255, arginine 256, and asparagine 257. Residue lysine 192 is the Proton acceptor of the active site. Position 256 (arginine 256) interacts with NADPH. NADPH-binding residues include valine 280 and glutamate 282.

This sequence belongs to the NAD-dependent glycerol-3-phosphate dehydrogenase family.

The protein localises to the cytoplasm. The catalysed reaction is sn-glycerol 3-phosphate + NAD(+) = dihydroxyacetone phosphate + NADH + H(+). The enzyme catalyses sn-glycerol 3-phosphate + NADP(+) = dihydroxyacetone phosphate + NADPH + H(+). The protein operates within membrane lipid metabolism; glycerophospholipid metabolism. Its function is as follows. Catalyzes the reduction of the glycolytic intermediate dihydroxyacetone phosphate (DHAP) to sn-glycerol 3-phosphate (G3P), the key precursor for phospholipid synthesis. The sequence is that of Glycerol-3-phosphate dehydrogenase [NAD(P)+] from Parvibaculum lavamentivorans (strain DS-1 / DSM 13023 / NCIMB 13966).